The following is a 103-amino-acid chain: Small ribosomal subunit protein uS10 (103 aa).

It belongs to the universal ribosomal protein uS10 family. In terms of assembly, part of the 30S ribosomal subunit.

In terms of biological role, involved in the binding of tRNA to the ribosomes. The chain is Small ribosomal subunit protein uS10 from Chlorobaculum parvum (strain DSM 263 / NCIMB 8327) (Chlorobium vibrioforme subsp. thiosulfatophilum).